Reading from the N-terminus, the 903-residue chain is Dynamin-like GTPase msp1, mitochondrial (903 aa).

A mitochondrion-targeting transit peptide spans 1 to 78 (MGISWFLSRF…RFFSFSSISR (78 aa)). Residues 86-103 (LPVAGFSLVAGGAAYIGA) form a helical membrane-spanning segment. Positions 167–188 (VLQAERAKEHRSNSNDKQKSSD) are enriched in basic and acidic residues. Residues 167-198 (VLQAERAKEHRSNSNDKQKSSDNDEDPNDTTV) are disordered. Residues 198–214 (VGIGAALAASILSVDSV) traverse the membrane as a helical segment. Positions 260 to 531 (AVTLPSIVVI…LEYTMSKNLQ (272 aa)) constitute a Dynamin-type G domain. The tract at residues 270–277 (GSQSSGKS) is G1 motif. GTP is bound by residues Ser-273, Ser-274, Gly-275, Lys-276, Ser-277, Ser-278, and Gly-292. Ser-277 serves as a coordination point for Mg(2+). Positions 296-298 (VTR) are G2 motif. Mg(2+)-binding residues include Thr-297 and Asp-370. The segment at 370–373 (DLPG) is G3 motif. Residues 438–441 (TKMD) are G4 motif. GTP is bound by residues Lys-439, Asp-441, and Ser-468. The G5 motif stretch occupies residues 467–470 (ISRI). The segment at 691-805 (ATSEQVENCV…VLKSRACKHK (115 aa)) is paddle region. An intrachain disulfide couples Cys-802 to Cys-811. A GED domain is found at 805–898 (KEAKYTCPEI…KINSLVILEQ (94 aa)).

Belongs to the TRAFAC class dynamin-like GTPase superfamily. Dynamin/Fzo/YdjA family. As to quaternary structure, homooligomer. Interacts with cdr1. Cleavage of the transit peptide by mitochondrial processing protease (MPP) produces a long integral membrane form of msp1 (l-msp1). Further processing by a rhomboid protease after the transmembrane regions produces a short peripheral membrane form of msp1 (s-msp1). Both isoforms are required for full activity.

It localises to the mitochondrion inner membrane. The protein localises to the mitochondrion intermembrane space. It catalyses the reaction GTP + H2O = GDP + phosphate + H(+). Its function is as follows. Dynamin-related GTPase that is essential for normal mitochondrial morphology by mediating fusion of the mitochondrial inner membranes and maintaining respiratory chain function. Exists in two forms: the transmembrane, long form (Dynamin-like GTPase msp1, long form; l-msp1), which is tethered to the inner mitochondrial membrane, and the short soluble form (Dynamin-like GTPase msp1, short form; s-msp1), which results from proteolytic cleavage and localizes in the intermembrane space. Both forms (l-msp1 and s-msp1) cooperate to catalyze the fusion of the mitochondrial inner membrane. Its role in mitochondrial morphology is required for mitochondrial genome maintenance. Constitutes the transmembrane long form (l-msp1) that plays a central role in mitochondrial inner membrane fusion. L-msp1 and the soluble short form (s-msp1) form higher-order helical assemblies that coordinate the fusion of mitochondrial inner membranes. Inner membrane-anchored l-msp1 molecules initiate membrane remodeling by recruiting soluble s-msp1 to rapidly polymerize into a flexible cylindrical scaffold encaging the mitochondrial inner membrane. Once at the membrane surface, the formation of s-msp1 helices induce bilayer curvature. Msp1 dimerization through the paddle region, which inserts into cardiolipin-containing membrane, promotes GTP hydrolysis and the helical assembly of a flexible msp1 lattice on the membrane, which drives membrane curvature and mitochondrial fusion. In terms of biological role, constitutes the soluble short form (s-msp1) generated by cleavage, which plays a central role in mitochondrial inner membrane fusion. The transmembrane long form (l-msp1) and the s-msp1 form higher-order helical assemblies that coordinate the fusion of mitochondrial inner membranes. Inner membrane-anchored l-msp1 molecules initiate membrane remodeling by recruiting soluble s-msp1 to rapidly polymerize into a flexible cylindrical scaffold encaging the mitochondrial inner membrane. Once at the membrane surface, the formation of s-msp1 helices induce bilayer curvature. Msp1 dimerization through the paddle region, which inserts into cardiolipin-containing membrane, promotes GTP hydrolysis and the helical assembly of a flexible msp1 lattice on the membrane, which drives membrane curvature and mitochondrial fusion. The sequence is that of Dynamin-like GTPase msp1, mitochondrial from Schizosaccharomyces pombe (strain 972 / ATCC 24843) (Fission yeast).